A 238-amino-acid chain; its full sequence is Probable septum site-determining protein MinC (238 aa).

This sequence belongs to the MinC family. As to quaternary structure, interacts with MinD and FtsZ.

Cell division inhibitor that blocks the formation of polar Z ring septums. Rapidly oscillates between the poles of the cell to destabilize FtsZ filaments that have formed before they mature into polar Z rings. Prevents FtsZ polymerization. The protein is Probable septum site-determining protein MinC of Xylella fastidiosa (strain M23).